The following is an 80-amino-acid chain: Defensin-like protein 276 (80 aa).

Residues 1 to 24 (MSGQKYQLVSLLLIICLLFSQSTA) form the signal peptide. 4 disulfide bridges follow: Cys27/Cys67, Cys33/Cys55, Cys39/Cys65, and Cys43/Cys66.

This sequence belongs to the DEFL family.

The protein localises to the secreted. The protein is Defensin-like protein 276 of Arabidopsis thaliana (Mouse-ear cress).